Reading from the N-terminus, the 367-residue chain is Peptide chain release factor 2 (367 aa).

Q254 carries the post-translational modification N5-methylglutamine.

The protein belongs to the prokaryotic/mitochondrial release factor family. Methylated by PrmC. Methylation increases the termination efficiency of RF2.

The protein resides in the cytoplasm. Its function is as follows. Peptide chain release factor 2 directs the termination of translation in response to the peptide chain termination codons UGA and UAA. In Burkholderia cenocepacia (strain ATCC BAA-245 / DSM 16553 / LMG 16656 / NCTC 13227 / J2315 / CF5610) (Burkholderia cepacia (strain J2315)), this protein is Peptide chain release factor 2.